We begin with the raw amino-acid sequence, 201 residues long: Sterile alpha motif domain-containing protein 12 (201 aa).

The 67-residue stretch at 77 to 143 (WTQQDVCKWL…LQQVLQLKVR (67 aa)) folds into the SAM domain.

In terms of tissue distribution, expressed in the brain.

The polypeptide is Sterile alpha motif domain-containing protein 12 (SAMD12) (Homo sapiens (Human)).